The primary structure comprises 162 residues: Protein SLM4 (162 aa).

A helical membrane pass occupies residues 127–144 (LLLLFIAEGSFPYGLLVI).

As to quaternary structure, component of the GSE complex composed of GTR1, GTR2, SLM4, MEH1 and LTV1. Component of the EGO complex, at least composed of GTR2, SLM4 and MEH1.

Its subcellular location is the vacuole membrane. Its function is as follows. Component of the GSE complex, a GTPase complex required for intracellular sorting of GAP1 out of the endosome. Component of the EGO complex, a complex involved in the regulation of microautophagy. The chain is Protein SLM4 (SLM4) from Saccharomyces cerevisiae (strain ATCC 204508 / S288c) (Baker's yeast).